We begin with the raw amino-acid sequence, 435 residues long: Type A flavoprotein fprA (435 aa).

Residues 48 to 228 form a zinc metallo-hydrolase region; the sequence is ANGTTYNAYA…PFRSFVAQVL (181 aa). Fe cation is bound by residues His98, Glu100, Asp102, His167, Asp186, and His243. A Flavodoxin-like domain is found at 276–415; sequence LLIFYVSAYR…EGRAFGRRLA (140 aa).

In the N-terminal section; belongs to the zinc metallo-hydrolase group 3 family. In terms of assembly, homodimer. Requires FMN as cofactor. It depends on Fe cation as a cofactor.

Its function is as follows. Low-potential electron donor to a number of redox enzymes. The polypeptide is Type A flavoprotein fprA (fprA) (Rhodobacter capsulatus (Rhodopseudomonas capsulata)).